The sequence spans 697 residues: MFS antiporter QDR3 (697 aa).

At 1–141 the chain is on the cytoplasmic side; sequence MSHSPNLSPQ…ARDYPNKIKY (141 aa). The segment at 38–109 is disordered; the sequence is HPIGHHGREQ…KPTSTSIKTN (72 aa). Composition is skewed to low complexity over residues 53 to 69 and 85 to 99; these read NTTKTTTTTTNKIHTTT and DLSSLESQQEQYLSQ. The chain crosses the membrane as a helical span at residues 142-162; the sequence is LIVFIIAFASLAGPFGTSVML. The Extracellular segment spans residues 163–180; sequence PAIDDIVNDLNTNVSTVN. Residues Asn175 and Asn180 are each glycosylated (N-linked (GlcNAc...) asparagine). The chain crosses the membrane as a helical span at residues 181–201; sequence VSVGIYLLSLGIFPLWWSSFS. Over 202–215 the chain is Cytoplasmic; that stretch reads ERFGRRSVYMVSFT. Residues 216 to 236 form a helical membrane-spanning segment; the sequence is LFVAFSIGTALSPNIAALIVL. At 237–240 the chain is on the extracellular side; it reads RVLQ. A helical membrane pass occupies residues 241 to 261; it reads GGSSASVQAVGAGTIADLFIP. Topologically, residues 262-268 are cytoplasmic; that stretch reads QERGQAM. Residues 269-289 form a helical membrane-spanning segment; sequence GLYYLGPLAGPFLAPILGGAV. The Extracellular portion of the chain corresponds to 290–296; sequence SQAWGWR. Residues 297-317 form a helical membrane-spanning segment; it reads ATQWLLMIISACSFVLITFFL. Residues 318–485 are Cytoplasmic-facing; it reads PETLRRVDTI…SIILLKHPPV (168 aa). The tract at residues 338–367 is disordered; it reads DNNGSQNEKIHDDFAGADNSSVHDIDGNPI. A helical membrane pass occupies residues 486 to 506; sequence VLVISFSAISFAAIYFFNMAI. Residues 507-519 are Extracellular-facing; it reads SYEYARSPYNFSS. N-linked (GlcNAc...) asparagine glycosylation occurs at Asn516. Residues 520-540 form a helical membrane-spanning segment; that stretch reads VILGLMYIPNSVTYFMASIIG. The Cytoplasmic portion of the chain corresponds to 541 to 565; that stretch reads GKWNDRLLNRYAQKHGELVPESRLS. A helical membrane pass occupies residues 566-586; sequence WNIVVAIILYPMACLIFGWTI. Residues 587-590 are Extracellular-facing; that stretch reads KYRE. The helical transmembrane segment at 591-611 threads the bilayer; that stretch reads FWVIPLIGTALFGFASMLVIG. Residues 612 to 626 are Cytoplasmic-facing; sequence ATVTYLVDSLPGKGA. A helical transmembrane segment spans residues 627–647; it reads TGVALNNLIRQILAAIATFIV. The Extracellular segment spans residues 648–653; it reads EPLLRA. Residues 654–674 form a helical membrane-spanning segment; it reads IGAGVLFSIIAGILLVSSLVL. Residues 675-697 are Cytoplasmic-facing; that stretch reads LYLKKRGAFFREHYDVMDLYAKL.

This sequence belongs to the major facilitator superfamily. CAR1 family.

Its subcellular location is the cell membrane. Functionally, MFS antiporter that does not display functional linkage as drug transporter and performs functions that significantly affect biofilm development and virulence. No substrate for transport has been identified yet, but plays an important role in the growth in the host. The polypeptide is MFS antiporter QDR3 (QDR3) (Candida albicans (strain SC5314 / ATCC MYA-2876) (Yeast)).